Here is a 459-residue protein sequence, read N- to C-terminus: Phosphoglucosamine mutase (459 aa).

The active-site Phosphoserine intermediate is Ser-112. The Mg(2+) site is built by Ser-112, Asp-249, Asp-251, and Asp-253. At Ser-112 the chain carries Phosphoserine.

Belongs to the phosphohexose mutase family. It depends on Mg(2+) as a cofactor. In terms of processing, activated by phosphorylation.

It catalyses the reaction alpha-D-glucosamine 1-phosphate = D-glucosamine 6-phosphate. Its function is as follows. Catalyzes the conversion of glucosamine-6-phosphate to glucosamine-1-phosphate. The polypeptide is Phosphoglucosamine mutase (Synechococcus sp. (strain RCC307)).